The sequence spans 220 residues: Probable nicotinate-nucleotide adenylyltransferase (220 aa).

The protein belongs to the NadD family.

The enzyme catalyses nicotinate beta-D-ribonucleotide + ATP + H(+) = deamido-NAD(+) + diphosphate. The protein operates within cofactor biosynthesis; NAD(+) biosynthesis; deamido-NAD(+) from nicotinate D-ribonucleotide: step 1/1. In terms of biological role, catalyzes the reversible adenylation of nicotinate mononucleotide (NaMN) to nicotinic acid adenine dinucleotide (NaAD). This Serratia proteamaculans (strain 568) protein is Probable nicotinate-nucleotide adenylyltransferase.